Consider the following 521-residue polypeptide: Cytochrome b5 reductase 4 (521 aa).

Met-1 bears the N-acetylmethionine mark. Polar residues predominate over residues 1 to 18 (MLNVPSQSFPAPRSQQRV). A disordered region spans residues 1-27 (MLNVPSQSFPAPRSQQRVASGGRSKVP). The region spanning 54 to 130 (LIEVTEEELK…LKECLVGRMA (77 aa)) is the Cytochrome b5 heme-binding domain. 2 residues coordinate heme: His-89 and His-112. The CS domain maps to 165–256 (PSYPSYDWFQ…KENTSWDFLG (92 aa)). In terms of domain architecture, FAD-binding FR-type spans 273 to 385 (LYYRKCQLIS…SSPEGNFKIS (113 aa)). FAD-binding positions include 365-380 (DRLQ…SPEG) and 392-424 (DLFL…KVKL).

This sequence belongs to the flavoprotein pyridine nucleotide cytochrome reductase family. It depends on FAD as a cofactor. In terms of tissue distribution, widely expressed.

It is found in the endoplasmic reticulum. The catalysed reaction is 2 Fe(III)-[cytochrome b5] + NADH = 2 Fe(II)-[cytochrome b5] + NAD(+) + H(+). Functionally, NADH-cytochrome b5 reductase involved in endoplasmic reticulum stress response pathway. Plays a critical role in protecting pancreatic beta-cells against oxidant stress, possibly by protecting the cell from excess buildup of reactive oxygen species (ROS). Reduces a variety of substrates in vitro, such as cytochrome c, feericyanide and methemoglobin. This is Cytochrome b5 reductase 4 from Homo sapiens (Human).